The chain runs to 388 residues: Yellow-related salivary protein SP03 (388 aa).

The N-terminal stretch at 1–18 is a signal peptide; the sequence is MKIFLCLIAVVSLQGVLA. Asn-29 is a glycosylation site (N-linked (GlcNAc...) asparagine).

Belongs to the major royal jelly protein family. As to expression, female salivary gland (at protein level).

It localises to the secreted. In terms of biological role, probably modulates blood feeding of sand flies on vertebrate species by binding and sequestering different mediators involved in the host response. Binds biogenic amines. Binds noradrenaline with medium affinity. Binds octopamine with low affinity. Poorly binds histamine, adrenaline and serotonin. This is Yellow-related salivary protein SP03 from Phlebotomus perniciosus (Phlebotomine sand fly).